A 491-amino-acid chain; its full sequence is Lysine--tRNA ligase (491 aa).

Mg(2+) contacts are provided by glutamate 398 and glutamate 405.

Belongs to the class-II aminoacyl-tRNA synthetase family. Homodimer. Mg(2+) is required as a cofactor.

The protein localises to the cytoplasm. The enzyme catalyses tRNA(Lys) + L-lysine + ATP = L-lysyl-tRNA(Lys) + AMP + diphosphate. The polypeptide is Lysine--tRNA ligase (Mycoplasmopsis synoviae (strain 53) (Mycoplasma synoviae)).